The primary structure comprises 134 residues: Profilin-2 (134 aa).

Cys-13 and Cys-118 are joined by a disulfide. Residues 84 to 100 (AVIRGKKGSGGITIKKT) carry the Involved in PIP2 interaction motif. Thr-114 bears the Phosphothreonine mark.

This sequence belongs to the profilin family. Occurs in many kinds of cells as a complex with monomeric actin in a 1:1 ratio. Phosphorylated by MAP kinases.

It is found in the cytoplasm. Its subcellular location is the cytoskeleton. Binds to actin and affects the structure of the cytoskeleton. At high concentrations, profilin prevents the polymerization of actin, whereas it enhances it at low concentrations. This chain is Profilin-2, found in Olea europaea (Common olive).